The primary structure comprises 147 residues: PTPN13-like protein, Y-linked (147 aa).

Expressed in testis. Detected in spermatocytes, spermatids and spermatozoa (at protein level).

The polypeptide is PTPN13-like protein, Y-linked (PRY) (Homo sapiens (Human)).